Here is a 550-residue protein sequence, read N- to C-terminus: MAAKDVKFGDSARKRMVAGVNILADAVKVTLGPKGRNVVLEKSFGAPTVTKDGVSVAKEIELKDKFENMGAQMVKEVASQANETAGDGTTTATVLAQSIVNEGIKAVTAGMNPMDLKRGIDKGTAEAVKAIREMAKPCDDSRMIAQVGTISANGDETIGKIIADAMEKVGKEGVITVEEGRGLEDELDVVEGMQFDRGFLSPYFINNQDNMSAELEDPYILLVDKKISNIRELLPVLEAVAKAGKPLQIIAEDIEGEALATLVVNNMRGIVKVNAVKAPGFGDRRKEMLQDIAILTGGTVISEEVGLTLENTTLDDLGTAKRVNVTKENTTIIGGAGAEADISARVEQIRKQIEDSSSDYDKEKLQERVAKLAGGVAVIKVGAGSEVEMKEKKARVEDALHSTRAAVEEGIVAGGGVTLIRAIAALDKVDAINDEQKAGVNILRRAMEAPLRQIVFNAGGESSVVVAKVKEGEGSFGFNAATEQYGDMLEMGILDPAKVTRSSLQAAASVASLIITTEAMVADEPEDDKAGGGMPDMGGMGGMGGMGGMM.

ATP-binding positions include 30 to 33 (TLGP), Lys-51, 87 to 91 (DGTTT), Gly-415, 479 to 481 (NAA), and Asp-495.

It belongs to the chaperonin (HSP60) family. In terms of assembly, forms a cylinder of 14 subunits composed of two heptameric rings stacked back-to-back. Interacts with the co-chaperonin GroES.

The protein resides in the cytoplasm. The catalysed reaction is ATP + H2O + a folded polypeptide = ADP + phosphate + an unfolded polypeptide.. Functionally, together with its co-chaperonin GroES, plays an essential role in assisting protein folding. The GroEL-GroES system forms a nano-cage that allows encapsulation of the non-native substrate proteins and provides a physical environment optimized to promote and accelerate protein folding. The sequence is that of Chaperonin GroEL from Marinobacter nauticus (strain ATCC 700491 / DSM 11845 / VT8) (Marinobacter aquaeolei).